The following is a 638-amino-acid chain: Threonine--tRNA ligase (638 aa).

A TGS domain is found at 1–63 (MVMIQIELPD…TESGRLEIIT (63 aa)). The segment at 245–536 (DHRRIGRELD…LIEHYAGNFP (292 aa)) is catalytic. 3 residues coordinate Zn(2+): C337, H388, and H513.

This sequence belongs to the class-II aminoacyl-tRNA synthetase family. As to quaternary structure, homodimer. Zn(2+) serves as cofactor.

It is found in the cytoplasm. It carries out the reaction tRNA(Thr) + L-threonine + ATP = L-threonyl-tRNA(Thr) + AMP + diphosphate + H(+). In terms of biological role, catalyzes the attachment of threonine to tRNA(Thr) in a two-step reaction: L-threonine is first activated by ATP to form Thr-AMP and then transferred to the acceptor end of tRNA(Thr). Also edits incorrectly charged L-seryl-tRNA(Thr). The sequence is that of Threonine--tRNA ligase from Syntrophotalea carbinolica (strain DSM 2380 / NBRC 103641 / GraBd1) (Pelobacter carbinolicus).